Reading from the N-terminus, the 501-residue chain is MKKRALISVFNKDGVLDFAKFLVSKDIEIVSTGGTYKYLKENGIDVIEINEVTNFPEMLDGRVKTLHPLVHAGILAIRDNKEHMKVLEEREIHTIDYVVVNLYPFFEKVKEDLTFEEKVEFIDIGGPTMLRAAAKNFQDVVVISNINDYEVVKSEIKNDGQVSLKTKKKLSGKVFNLMSAYDGAIANFMLGDEEEYPEYLSVSYKKMQNLRYGENSHQSAAVYSSTMVDGAMNTFETLNGKELSYNNFKDVDIAWKCANEFDEPACCALKHNTPCGVATGENSYEAYMKAYEVDPTSIFGGIIGFNRKVDKKTAQEMVKIFLEVIAAPDYDEDALEVLKTKKNLRVLKFHNTPKAEKCMVTVDGAILVQDEDNKLIDEIKVVTEKKPSDEEMKDLLFGMKVVKYVKSNAIVVAHNGIALGIGGGQVNRIWPTEDALRRGKGATILASDAFFPFRDVVDKAAEGGIKAIIQPGGSMRDQESIDACNEHGIAMVFTGFRHFKH.

Positions 1 to 144 (MKKRALISVF…KNFQDVVVIS (144 aa)) constitute an MGS-like domain.

This sequence belongs to the PurH family.

It carries out the reaction (6R)-10-formyltetrahydrofolate + 5-amino-1-(5-phospho-beta-D-ribosyl)imidazole-4-carboxamide = 5-formamido-1-(5-phospho-D-ribosyl)imidazole-4-carboxamide + (6S)-5,6,7,8-tetrahydrofolate. It catalyses the reaction IMP + H2O = 5-formamido-1-(5-phospho-D-ribosyl)imidazole-4-carboxamide. Its pathway is purine metabolism; IMP biosynthesis via de novo pathway; 5-formamido-1-(5-phospho-D-ribosyl)imidazole-4-carboxamide from 5-amino-1-(5-phospho-D-ribosyl)imidazole-4-carboxamide (10-formyl THF route): step 1/1. It functions in the pathway purine metabolism; IMP biosynthesis via de novo pathway; IMP from 5-formamido-1-(5-phospho-D-ribosyl)imidazole-4-carboxamide: step 1/1. In Clostridium botulinum (strain Eklund 17B / Type B), this protein is Bifunctional purine biosynthesis protein PurH.